A 498-amino-acid polypeptide reads, in one-letter code: Swainsonine transporter swnT (498 aa).

The span at 1 to 10 (MSLRNDEQTE) shows a compositional bias: basic and acidic residues. Residues 1-21 (MSLRNDEQTEKGAVVGKVDSQ) are disordered. Transmembrane regions (helical) follow at residues 42–64 (LSAIGIGYGVTNTAVGLLLVLGT), 79–99 (LAMAAVGLATATTLSELISAI), 126–146 (AMISWIAAIAIGASGNLAVPV), 167–187 (FVVFQLINIVTCFGACFEYFL), and 193–213 (ALLLVNVLSVSAIIITLFATA). 2 N-linked (GlcNAc...) asparagine glycosylation sites follow: N227 and N242. 6 consecutive transmembrane segments (helical) span residues 272-292 (LIWTIVIAFSSGLLMILAVLV), 316-336 (AAAIGLWVPVLFLVFASVWSI), 370-390 (PIWSLIGSAIGTALFGCLYLA), 398-418 (LIATGILLQYASYSIPTILVL), 436-456 (GFMANIVMLAWTLVALIFYCF), and 469-489 (YVSAVLILIAILITSLWFLYA).

This sequence belongs to the amino acid-polyamine-organocation (APC) superfamily. Amino acid/choline transporter (ACT) (TC 2.A.3.4) family.

It localises to the membrane. Transmembrane transporter; part of the gene cluster that mediates the biosynthesis of swainsonine, a cytotoxic fungal alkaloid and a potential cancer therapy drug. Does not mediate the secretion of SW and the exact role of swnT in SW biosynthesis remains to be determined. The sequence is that of Swainsonine transporter swnT from Arthroderma benhamiae (strain ATCC MYA-4681 / CBS 112371) (Trichophyton mentagrophytes).